A 442-amino-acid polypeptide reads, in one-letter code: Asparagine--tRNA ligase (442 aa).

This sequence belongs to the class-II aminoacyl-tRNA synthetase family. Homodimer.

It localises to the cytoplasm. The enzyme catalyses tRNA(Asn) + L-asparagine + ATP = L-asparaginyl-tRNA(Asn) + AMP + diphosphate + H(+). This is Asparagine--tRNA ligase from Koribacter versatilis (strain Ellin345).